We begin with the raw amino-acid sequence, 173 residues long: 3-hydroxydecanoyl-[acyl-carrier-protein] dehydratase (173 aa).

His71 is a catalytic residue.

The protein belongs to the thioester dehydratase family. FabA subfamily. Homodimer.

The protein resides in the cytoplasm. It catalyses the reaction a (3R)-hydroxyacyl-[ACP] = a (2E)-enoyl-[ACP] + H2O. It carries out the reaction (3R)-hydroxydecanoyl-[ACP] = (2E)-decenoyl-[ACP] + H2O. The enzyme catalyses (2E)-decenoyl-[ACP] = (3Z)-decenoyl-[ACP]. The protein operates within lipid metabolism; fatty acid biosynthesis. Functionally, necessary for the introduction of cis unsaturation into fatty acids. Catalyzes the dehydration of (3R)-3-hydroxydecanoyl-ACP to E-(2)-decenoyl-ACP and then its isomerization to Z-(3)-decenoyl-ACP. Can catalyze the dehydratase reaction for beta-hydroxyacyl-ACPs with saturated chain lengths up to 16:0, being most active on intermediate chain length. This chain is 3-hydroxydecanoyl-[acyl-carrier-protein] dehydratase, found in Bradyrhizobium diazoefficiens (strain JCM 10833 / BCRC 13528 / IAM 13628 / NBRC 14792 / USDA 110).